Here is a 1055-residue protein sequence, read N- to C-terminus: Ubiquitin carboxyl-terminal hydrolase 25 (1055 aa).

Residues Gln14–Lys57 form the UBA-like domain. An SUMO interaction domain (SIM) region spans residues Asn77–Leu102. Position 85 is a phosphoserine (Ser85). Positions Thr89–Thr95 match the Required for SUMO paralog-specific binding motif. 2 consecutive UIM domains span residues Asp97 to Ala116 and Thr123 to Asn140. Lys99 is covalently cross-linked (Glycyl lysine isopeptide (Lys-Gly) (interchain with G-Cter in SUMO); alternate). Lys99 is covalently cross-linked (Glycyl lysine isopeptide (Lys-Gly) (interchain with G-Cter in ubiquitin); alternate). Residues Val169 to Asp657 form the USP domain. Residue Cys178 is part of the active site. The segment at Val464–Ser507 is disordered. Residues Ser476–Ala496 show a composition bias toward polar residues. Residues Leu497–Ser507 are compositionally biased toward low complexity. Residues Thr541–Glu578 adopt a coiled-coil conformation. Catalysis depends on residues His599 and His607. Residues Asp684 to Leu717 are a coiled coil. The tract at residues Thr727–Phe749 is disordered. Tyr740 carries the phosphotyrosine modification.

Belongs to the peptidase C19 family. In terms of assembly, homotetramer, inhibited form. Homodimer, active form. Interacts with ACTA1 (via its C-terminus); the interaction occurs for all isoforms but is strongest for isoform USP25m in muscle differentiating cells. Interacts (isoform USP25m only) with MYBPC1; the interaction prevents proteasomal degradation of MYBPC1. Interacts (isoform USP25m only) with FLNC (via filament repeats 17-18, 20-21 and 24). Interacts with GAPDH. Interacts with SUMO3; the interaction sumoylates efficiently USP25. Interacts with SUMO2; the interaction sumoylates efficiently USP25. Interacts with SUMO1; the interaction only weakly sumoylates USP25. Interacts with SYK; phosphorylates USP25 and regulates USP25 intracellular levels. Acetylated. In terms of processing, sumoylation impairs binding to and hydrolysis of ubiquitin chains. Sumoylated preferentially with SUMO2 or SUMO3. Desumoylated by SENP1. Polyubiquitinated by SMURF1 by promoting the 'Lys-48'-linkage leading to proteasomal degradation. Post-translationally, preferentially monoubiquitinated but can also be polyubiquitinated. Autodeubiquitinated. Ubiquitination activates the enzymatic activity either by preventing sumoylation or by allowing novel interactions. Phosphorylation in the C-terminal by SYK regulates USP25 cellular levels. In terms of tissue distribution, isoform USP25a is found in most adult and fetal tissues; expression is moderately high in testis, pancreas, kidney, skeletal muscle, liver, lung, placenta, heart, but very low in peripheral blood, colon, small intestine, ovary, prostate, thymus and spleen. Expressed in the brain, with high levels in the cerebral cortex. Isoform USP25b is found in all tissues except heart and skeletal muscle. Isoform USP25m is heart and skeletal muscle specific.

The protein resides in the cytoplasm. It is found in the nucleus. The catalysed reaction is Thiol-dependent hydrolysis of ester, thioester, amide, peptide and isopeptide bonds formed by the C-terminal Gly of ubiquitin (a 76-residue protein attached to proteins as an intracellular targeting signal).. Its function is as follows. Deubiquitinating enzyme that hydrolyzes ubiquitin moieties conjugated to substrates and thus, functions in various biological processes including inflammation and immune response. Modulates the Wnt/beta-catenin pathway by deubiquitinating and stabilizing tankyrases TNKS1 and TNKS2. Regulates KEAP1-NRF2 axis in the defense against oxidative assaults by deubiquitinating KEAP1 and protecting it from degradation leading to degradation of the NRF2 transcription factor that is responsible for mounting an anti-oxidation gene expression program. Positively regulates RNA virus-induced innate signaling by interacting with and deubiquitinating ERLIN1 and ERLIN2. In turn, restricts virus production by regulating cholesterol biosynthetic flux. Acts as a negative regulator of interleukin-17-mediated signaling and inflammation through the removal of 'Lys-63'-linked ubiquitination of TRAF5 and TRAF6. Prevents the ubiquitination and degradation of TRAF3 to reduce the phosphorylation levels of JNK and P38, the secretion of IL-1B and to induce endotoxin tolerance. Functionally, the muscle-specific isoform (USP25m) may have a role in the regulation of muscular differentiation and function. This Homo sapiens (Human) protein is Ubiquitin carboxyl-terminal hydrolase 25 (USP25).